The sequence spans 691 residues: DNA ligase (691 aa).

NAD(+) contacts are provided by residues 41 to 45 (DAEYD), 90 to 91 (SL), and E130. The N6-AMP-lysine intermediate role is filled by K132. NAD(+) is bound by residues R153, E190, K307, and K331. Residues C425, C428, C443, and C449 each coordinate Zn(2+). Positions 610–691 (APQGVLAGKT…MHTLLEGHAR (82 aa)) constitute a BRCT domain.

The protein belongs to the NAD-dependent DNA ligase family. LigA subfamily. It depends on Mg(2+) as a cofactor. Requires Mn(2+) as cofactor.

The enzyme catalyses NAD(+) + (deoxyribonucleotide)n-3'-hydroxyl + 5'-phospho-(deoxyribonucleotide)m = (deoxyribonucleotide)n+m + AMP + beta-nicotinamide D-nucleotide.. DNA ligase that catalyzes the formation of phosphodiester linkages between 5'-phosphoryl and 3'-hydroxyl groups in double-stranded DNA using NAD as a coenzyme and as the energy source for the reaction. It is essential for DNA replication and repair of damaged DNA. The sequence is that of DNA ligase from Burkholderia pseudomallei (strain 668).